A 98-amino-acid chain; its full sequence is NADH-ubiquinone oxidoreductase chain 4L (98 aa).

3 helical membrane passes run 1 to 21 (MSMVYANIFMAFVVSLMGMLV), 29 to 49 (SLLCLEGMMLSLFVMMSVTIL), and 61 to 81 (IILLVFAACEAALGLSLLVMV).

It belongs to the complex I subunit 4L family. In terms of assembly, core subunit of respiratory chain NADH dehydrogenase (Complex I) which is composed of 45 different subunits.

It localises to the mitochondrion inner membrane. It catalyses the reaction a ubiquinone + NADH + 5 H(+)(in) = a ubiquinol + NAD(+) + 4 H(+)(out). Core subunit of the mitochondrial membrane respiratory chain NADH dehydrogenase (Complex I) which catalyzes electron transfer from NADH through the respiratory chain, using ubiquinone as an electron acceptor. Part of the enzyme membrane arm which is embedded in the lipid bilayer and involved in proton translocation. The polypeptide is NADH-ubiquinone oxidoreductase chain 4L (MT-ND4L) (Odobenus rosmarus rosmarus (Atlantic walrus)).